Reading from the N-terminus, the 172-residue chain is Mitochondrial import inner membrane translocase subunit Tim17-B (172 aa).

An intrachain disulfide couples cysteine 9 to cysteine 78. 3 helical membrane passes run 17–37, 61–77, and 113–133; these read CGGA…IKGF, QIGG…STID, and VGSA…GILL. The tract at residues 147 to 172 is disordered; sequence FLEDPSQLTPKEGSPAPGYPNYQQYH.

Belongs to the Tim17/Tim22/Tim23 family. As to quaternary structure, component of the TIM23 complex at least composed of TIMM23, TIMM17 (TIMM17A or TIMM17B) and TIMM50. The complex interacts with the TIMM44 component of the PAM complex. The complex also interacts with DNAJC15.

It is found in the mitochondrion inner membrane. Essential component of the TIM23 complex, a complex that mediates the translocation of transit peptide-containing proteins across the mitochondrial inner membrane. The sequence is that of Mitochondrial import inner membrane translocase subunit Tim17-B (Timm17b) from Mus musculus (Mouse).